The primary structure comprises 311 residues: Dehydrogenase/reductase SDR family member 7C (311 aa).

The N-terminal stretch at 1 to 18 (MGLMAVLMLPLLLLGISG) is a signal peptide. Residues Ser47, Leu49, Tyr191, Lys195, and Ser226 each contribute to the NAD(+) site. Tyr191 acts as the Proton acceptor in catalysis.

The protein belongs to the short-chain dehydrogenases/reductases (SDR) family. In terms of tissue distribution, expressed in skeletal muscle and cardiac muscle. Also expressed in liver, kidney, adipocytes and skin.

The protein resides in the sarcoplasmic reticulum membrane. The enzyme catalyses all-trans-retinol + NAD(+) = all-trans-retinal + NADH + H(+). Functionally, NADH-dependent oxidoreductase which catalyzes the oxidation of all-trans-retinol to all-trans-retinal. Plays a role in the regulation of cardiac and skeletal muscle metabolic functions. Maintains Ca(2+) intracellular homeostasis by repressing Ca(2+) release from the sarcoplasmic reticulum (SR) in myotubes, possibly through local alternations in NAD/NADH or retinol/retinal. Also plays a role in Ca(2+) homeostasis by controlling Ca(2+) overload in the cytosol and the SR in myotubes. Involved in glucose uptake into skeletal muscles and muscle performance by activating PI3K and mTORC2-mediated AKT1 phosphorylation signaling pathways, possibly through the action of its downstream catalytic product all-trans-retinoic acid. The polypeptide is Dehydrogenase/reductase SDR family member 7C (Mus musculus (Mouse)).